A 114-amino-acid polypeptide reads, in one-letter code: UPF0342 protein LCA_0622 (114 aa).

The protein belongs to the UPF0342 family.

This is UPF0342 protein LCA_0622 from Latilactobacillus sakei subsp. sakei (strain 23K) (Lactobacillus sakei subsp. sakei).